An 87-amino-acid polypeptide reads, in one-letter code: DNA/RNA-binding protein Alba (87 aa).

K9 carries the N6-acetyllysine modification.

The protein belongs to the histone-like Alba family. Acetylated. Acetylation at Lys-9 decreases DNA-binding affinity.

The protein resides in the cytoplasm. It is found in the chromosome. Binds double-stranded DNA tightly but without sequence specificity. Involved in DNA compaction. The sequence is that of DNA/RNA-binding protein Alba from Methanocaldococcus jannaschii (strain ATCC 43067 / DSM 2661 / JAL-1 / JCM 10045 / NBRC 100440) (Methanococcus jannaschii).